A 443-amino-acid polypeptide reads, in one-letter code: CBL-interacting protein kinase 29 (443 aa).

The Protein kinase domain maps to tyrosine 32 to phenylalanine 292. ATP is bound by residues leucine 38 to valine 46 and lysine 61. Aspartate 164 acts as the Proton acceptor in catalysis. Residues aspartate 182 to glutamate 207 form an activation loop region. Positions alanine 313–glycine 347 constitute an NAF domain. The PPI stretch occupies residues proline 350–valine 379.

This sequence belongs to the protein kinase superfamily. CAMK Ser/Thr protein kinase family. SNF1 subfamily. The cofactor is Mn(2+).

The enzyme catalyses L-seryl-[protein] + ATP = O-phospho-L-seryl-[protein] + ADP + H(+). It catalyses the reaction L-threonyl-[protein] + ATP = O-phospho-L-threonyl-[protein] + ADP + H(+). In terms of biological role, CIPK serine-threonine protein kinases interact with CBL proteins. Binding of a CBL protein to the regulatory NAF domain of CIPK protein lead to the activation of the kinase in a calcium-dependent manner. The sequence is that of CBL-interacting protein kinase 29 (CIPK29) from Oryza sativa subsp. japonica (Rice).